Reading from the N-terminus, the 428-residue chain is AA14 family lytic polysaccharide monooxygenase A (428 aa).

Positions 1–21 are cleaved as a signal peptide; it reads MLRSLPASLALVAAFASKASA. Residues N34 and N52 are each glycosylated (N-linked (GlcNAc...) asparagine). Cystine bridges form between C88–C112, C131–C158, C174–C179, C181–C203, and C223–C239. Residue N155 is glycosylated (N-linked (GlcNAc...) asparagine). 2 disordered regions span residues 216–239 and 292–428; these read KPAV…PGNC and SSGT…HNAH. Positions 223 to 232 are enriched in basic and acidic residues; that stretch reads CGADPDHGKP. Residue N238 is glycosylated (N-linked (GlcNAc...) asparagine). The span at 292–379 shows a compositional bias: low complexity; that stretch reads SSGTGSSPTS…SVATEASSSP (88 aa). Over residues 380 to 402 the composition is skewed to polar residues; that stretch reads IASTTVDEAVVSSSTVGSINPTR. Residues 414–428 are compositionally biased toward basic residues; it reads QKKKRKHARHLHNAH.

It depends on Cu(2+) as a cofactor.

The protein resides in the secreted. Its function is as follows. Lytic polysaccharide monooxygenase (LPMO) showing oxidase and peroxidase activities that are common for LPMOs. Catalysis by LPMOs requires the reduction of the active-site copper from Cu(II) to Cu(I) by a reducing agent and H(2)O(2) or O(2) as a cosubstrate. Shows no activity on cellulose-associated xylan or any other tested polysaccharide substrate, meaning that the substrate rremains unknown. The chain is AA14 family lytic polysaccharide monooxygenase A from Trametes coccinea (strain BRFM310) (Pycnoporus coccineus).